Here is a 314-residue protein sequence, read N- to C-terminus: Testis-specific Y-encoded protein 4 (314 aa).

It belongs to the nucleosome assembly protein (NAP) family.

It is found in the cytoplasm. Its subcellular location is the nucleus. In terms of biological role, may be involved in sperm differentiation and proliferation. This is Testis-specific Y-encoded protein 4 (TSPY4) from Homo sapiens (Human).